A 509-amino-acid chain; its full sequence is FAD-linked oxidoreductase dpmaF (509 aa).

Residues 1 to 21 form the signal peptide; the sequence is MTRLSLQLIAGLAGQAWLVNS. The region spanning 59-231 is the FAD-binding PCMH-type domain; sequence LQYEPIAVAV…AEYGFETFPA (173 aa). N-linked (GlcNAc...) asparagine glycosylation is found at N125, N193, and N281.

It belongs to the oxygen-dependent FAD-linked oxidoreductase family. FAD is required as a cofactor.

It participates in secondary metabolite biosynthesis; terpenoid biosynthesis. Its function is as follows. FAD-linked oxidoreductase; part of the gene cluster that mediates the biosynthesis of the diterpenoid pyrones subglutinols A and B. The first step of the pathway is the synthesis of the alpha-pyrone moiety by the polyketide synthase dpmaA via condensation of one acetyl-CoA starter unit with 3 malonyl-CoA units and 2 methylations. The alpha-pyrone is then combined with geranylgeranyl pyrophosphate (GGPP) formed by the GGPP synthase dpmaD through the action of the prenyltransferase dpmaC to yield a linear alpha-pyrone diterpenoid. Subsequent steps in the diterpenoid pyrone biosynthetic pathway involve the decalin core formation, which is initiated by the epoxidation of the C10-C11 olefin by the FAD-dependent oxidoreductase dpmaE, and is followed by a cyclization cascade catalyzed by the terpene cyclase dpmaB. The dehydrogenase dpmaF is then involved in tetrahydrofuran (THF) ring formation at the C5 unit to complete the formation of subglutinols A and B. The chain is FAD-linked oxidoreductase dpmaF from Metarhizium anisopliae (Entomophthora anisopliae).